The following is a 409-amino-acid chain: Pleckstrin homology domain-containing family O member 1 (409 aa).

Positions 1–20 (MMKKNNSTKRGPQDGNHQCA) are disordered. The region spanning 21–132 (PPEKVGWVRK…WINALNSAIT (112 aa)) is the PH domain. The interaction with capping proteins (CPs) stretch occupies residues 133–193 (RAKNRVLDEV…MLTLDLIQEE (61 aa)). Residues 136 to 308 (NRVLDEVTVE…PHAPGQLSRI (173 aa)) form an interaction with ATM, CKIP, IFP35 and NMI region. Disordered regions lie at residues 218–304 (LAGS…APGQ), 325–350 (EVQGLGDGKRKAKEPPRSPPDSESEQ), and 390–409 (TPDSHLRQTTQHSQYRKSLM). A phosphoserine mark is found at Ser-227 and Ser-271. A negative regulator of AP-1 activity region spans residues 308 to 409 (IQDLVARKLE…QHSQYRKSLM (102 aa)). The segment covering 331 to 340 (DGKRKAKEPP) has biased composition (basic and acidic residues). The residue at position 342 (Ser-342) is a Phosphoserine. The segment covering 390–402 (TPDSHLRQTTQHS) has biased composition (polar residues).

In terms of assembly, heterodimer or homodimer. Interacts with CK2 and actin capping subunits (capping protein CP-alpha and CP-beta). CKIP1 and CK2 together inhibit the activity of actin capping protein at the barbed ends of actin filaments. Interacts with ATM, IFP35, JUN, JUND, NMI and PI3K. Interacts with AKT1, AKT2 and AKT3 (each isozyme of PKB), PtdIns(3,5)P2, PtdIns(4,5)P2 and PtdIns(3,4,5)P2. C-terminal fragments could be released during apoptosis via caspase-3-dependent cleavage.

The protein resides in the membrane. It localises to the nucleus. Its subcellular location is the cytoplasm. Its function is as follows. Plays a role in the regulation of the actin cytoskeleton through its interactions with actin capping protein (CP). May function to target CK2 to the plasma membrane thereby serving as an adapter to facilitate the phosphorylation of CP by protein kinase 2 (CK2). Appears to target ATM to the plasma membrane. Also implicated in PI3K-regulated muscle differentiation, the regulation of AP-1 activity (plasma membrane bound AP-1 regulator that translocates to the nucleus) and the promotion of apoptosis induced by tumor necrosis factor TNF. When bound to PKB, it inhibits it probably by decreasing PKB level of phosphorylation. In Bos taurus (Bovine), this protein is Pleckstrin homology domain-containing family O member 1 (PLEKHO1).